Here is a 303-residue protein sequence, read N- to C-terminus: N-acetyl-D-glucosamine kinase (303 aa).

ATP contacts are provided by residues 4–11 (GFDIGGTK) and 133–140 (GVGGGLIF). Zn(2+) is bound by residues His-157, Cys-177, Cys-179, and Cys-184.

The protein belongs to the ROK (NagC/XylR) family. NagK subfamily.

The catalysed reaction is N-acetyl-D-glucosamine + ATP = N-acetyl-D-glucosamine 6-phosphate + ADP + H(+). It functions in the pathway cell wall biogenesis; peptidoglycan recycling. In terms of biological role, catalyzes the phosphorylation of N-acetyl-D-glucosamine (GlcNAc) derived from cell-wall degradation, yielding GlcNAc-6-P. In Shigella boydii serotype 4 (strain Sb227), this protein is N-acetyl-D-glucosamine kinase.